The following is a 139-amino-acid chain: Cystatin-11 (139 aa).

Residues Met-1–Arg-28 form the signal peptide. Cystine bridges form between Cys-94–Cys-102 and Cys-115–Cys-135. An N-linked (GlcNAc...) asparagine glycan is attached at Asn-134.

Belongs to the cystatin family. In terms of tissue distribution, expressed in epididymis, where it localizes to the proximal caput and also part of the midcaput. Not detected in other tissues tested.

Its subcellular location is the secreted. In terms of biological role, has antibacterial activity against the Gram-negative bacteria E.coli. May play a role in sperm maturation and fertilization. The chain is Cystatin-11 from Mus musculus (Mouse).